The sequence spans 208 residues: Imidazole glycerol phosphate synthase subunit HisH (208 aa).

The region spanning 1-206 is the Glutamine amidotransferase type-1 domain; the sequence is MFAIVDYDTG…KEMVSANDFS (206 aa). The active-site Nucleophile is C79. Active-site residues include H181 and E183.

In terms of assembly, heterodimer of HisH and HisF.

The protein localises to the cytoplasm. It carries out the reaction 5-[(5-phospho-1-deoxy-D-ribulos-1-ylimino)methylamino]-1-(5-phospho-beta-D-ribosyl)imidazole-4-carboxamide + L-glutamine = D-erythro-1-(imidazol-4-yl)glycerol 3-phosphate + 5-amino-1-(5-phospho-beta-D-ribosyl)imidazole-4-carboxamide + L-glutamate + H(+). It catalyses the reaction L-glutamine + H2O = L-glutamate + NH4(+). The protein operates within amino-acid biosynthesis; L-histidine biosynthesis; L-histidine from 5-phospho-alpha-D-ribose 1-diphosphate: step 5/9. IGPS catalyzes the conversion of PRFAR and glutamine to IGP, AICAR and glutamate. The HisH subunit catalyzes the hydrolysis of glutamine to glutamate and ammonia as part of the synthesis of IGP and AICAR. The resulting ammonia molecule is channeled to the active site of HisF. In Lactiplantibacillus plantarum (strain ATCC BAA-793 / NCIMB 8826 / WCFS1) (Lactobacillus plantarum), this protein is Imidazole glycerol phosphate synthase subunit HisH.